The sequence spans 200 residues: Pyridoxal 5'-phosphate synthase subunit PdxT (200 aa).

52-54 (GES) provides a ligand contact to L-glutamine. The active-site Nucleophile is the Cys-84. L-glutamine is bound by residues Arg-116 and 145–146 (IR). Active-site charge relay system residues include His-181 and Glu-183.

The protein belongs to the glutaminase PdxT/SNO family. In terms of assembly, in the presence of PdxS, forms a dodecamer of heterodimers. Only shows activity in the heterodimer.

The enzyme catalyses aldehydo-D-ribose 5-phosphate + D-glyceraldehyde 3-phosphate + L-glutamine = pyridoxal 5'-phosphate + L-glutamate + phosphate + 3 H2O + H(+). It catalyses the reaction L-glutamine + H2O = L-glutamate + NH4(+). The protein operates within cofactor biosynthesis; pyridoxal 5'-phosphate biosynthesis. Its function is as follows. Catalyzes the hydrolysis of glutamine to glutamate and ammonia as part of the biosynthesis of pyridoxal 5'-phosphate. The resulting ammonia molecule is channeled to the active site of PdxS. This is Pyridoxal 5'-phosphate synthase subunit PdxT from Saccharolobus islandicus (strain Y.N.15.51 / Yellowstone #2) (Sulfolobus islandicus).